Consider the following 389-residue polypeptide: Metal tolerance protein 2 (389 aa).

Over 1–81 (MGFRLAHLAA…GGEASERIFR (81 aa)) the chain is Cytoplasmic. Residues 82–102 (LGLAADVVLTVGKAVTGYLSG) traverse the membrane as a helical segment. Topologically, residues 103–104 (ST) are vacuolar. Residues 105–125 (AIAADAAHSLSDIVLSGVALL) form a helical membrane-spanning segment. Topologically, residues 126–148 (SYKAAKAPRDKEHPYGHGKFESL) are cytoplasmic. The helical transmembrane segment at 149-169 (GALGISSMLLVTAGGIAWHAF) threads the bilayer. Residues 170–206 (DVLQGVMSSAPDIIGNVSHAHHSHGSSGHHHGIDLEH) lie on the Vacuolar side of the membrane. A helical transmembrane segment spans residues 207–227 (PILALSVTAFAISVKEGLYWI). The Cytoplasmic segment spans residues 228–250 (TKRAGEKEGSGLMKANAWHHRSD). Residues 251–271 (AISSVVALLGVGGSILGVPYL) traverse the membrane as a helical segment. The Vacuolar segment spans residues 272-275 (DPLA). The chain crosses the membrane as a helical span at residues 276–296 (GLVVSGMILKAGVHTGYESVL). At 297 to 389 (ELVDAAVDPS…SLQPLNQNAL (93 aa)) the chain is on the cytoplasmic side.

This sequence belongs to the cation diffusion facilitator (CDF) transporter (TC 2.A.4) family. SLC30A subfamily.

It localises to the vacuole membrane. Functionally, involved in sequestration of excess metal in the cytoplasm into vacuoles to maintain metal homeostasis. The polypeptide is Metal tolerance protein 2 (MTP2) (Oryza sativa subsp. japonica (Rice)).